We begin with the raw amino-acid sequence, 194 residues long: Extracellular globin-E1 (194 aa).

Globin domains are found at residues 1–45 (DISH…MGLS) and 55–194 (GLSG…LRQA). His-150 contacts heme b.

The protein belongs to the globin family. Artemia hemoglobin is a dimer of two similar sized subunits. Each subunit represents a globin chain which exists in two forms (alpha and beta), thus making possible three different phenotypes (HB1, alpha(2), HB2, alpha/beta, HB3, beta(2)). The globin chain is a polymer of eight heme-binding covalently linked domains.

The protein is Extracellular globin-E1 of Artemia sp. (Brine shrimp).